The primary structure comprises 326 residues: Putative ubiquitin-conjugating enzyme E2 38 (326 aa).

A UBC core domain is found at 54–214; sequence NWVKKVQDEW…VFLLSLKTMV (161 aa). Cys140 (glycyl thioester intermediate) is an active-site residue. The tract at residues 297-326 is disordered; the sequence is LAEKPKPPVNNANTENQSKKKTRKRSRSSR. Positions 315–326 are enriched in basic residues; it reads KKKTRKRSRSSR.

This sequence belongs to the ubiquitin-conjugating enzyme family.

It catalyses the reaction S-ubiquitinyl-[E1 ubiquitin-activating enzyme]-L-cysteine + [E2 ubiquitin-conjugating enzyme]-L-cysteine = [E1 ubiquitin-activating enzyme]-L-cysteine + S-ubiquitinyl-[E2 ubiquitin-conjugating enzyme]-L-cysteine.. It participates in protein modification; protein ubiquitination. Accepts the ubiquitin from the E1 complex and catalyzes its covalent attachment to other proteins. The polypeptide is Putative ubiquitin-conjugating enzyme E2 38 (UBC38) (Arabidopsis thaliana (Mouse-ear cress)).